Here is a 343-residue protein sequence, read N- to C-terminus: Phosphate acyltransferase (343 aa).

Belongs to the PlsX family. As to quaternary structure, homodimer. Probably interacts with PlsY.

The protein resides in the cytoplasm. The catalysed reaction is a fatty acyl-[ACP] + phosphate = an acyl phosphate + holo-[ACP]. It functions in the pathway lipid metabolism; phospholipid metabolism. Catalyzes the reversible formation of acyl-phosphate (acyl-PO(4)) from acyl-[acyl-carrier-protein] (acyl-ACP). This enzyme utilizes acyl-ACP as fatty acyl donor, but not acyl-CoA. The polypeptide is Phosphate acyltransferase (Haemophilus ducreyi (strain 35000HP / ATCC 700724)).